Here is a 209-residue protein sequence, read N- to C-terminus: Large ribosomal subunit protein uL3 (209 aa).

Belongs to the universal ribosomal protein uL3 family. In terms of assembly, part of the 50S ribosomal subunit. Forms a cluster with proteins L14 and L19.

In terms of biological role, one of the primary rRNA binding proteins, it binds directly near the 3'-end of the 23S rRNA, where it nucleates assembly of the 50S subunit. The polypeptide is Large ribosomal subunit protein uL3 (Oceanobacillus iheyensis (strain DSM 14371 / CIP 107618 / JCM 11309 / KCTC 3954 / HTE831)).